A 221-amino-acid polypeptide reads, in one-letter code: ATP-dependent dethiobiotin synthetase BioD (221 aa).

11–16 contacts ATP; sequence DIGKTL. Residue threonine 15 participates in Mg(2+) binding. Lysine 35 is an active-site residue. Threonine 39 is a substrate binding site. ATP is bound by residues aspartate 44 and 103-106; that span reads EGAG. 2 residues coordinate Mg(2+): aspartate 44 and glutamate 103.

The protein belongs to the dethiobiotin synthetase family. As to quaternary structure, homodimer. Mg(2+) serves as cofactor.

The protein resides in the cytoplasm. It carries out the reaction (7R,8S)-7,8-diammoniononanoate + CO2 + ATP = (4R,5S)-dethiobiotin + ADP + phosphate + 3 H(+). Its pathway is cofactor biosynthesis; biotin biosynthesis; biotin from 7,8-diaminononanoate: step 1/2. Catalyzes a mechanistically unusual reaction, the ATP-dependent insertion of CO2 between the N7 and N8 nitrogen atoms of 7,8-diaminopelargonic acid (DAPA, also called 7,8-diammoniononanoate) to form a ureido ring. The polypeptide is ATP-dependent dethiobiotin synthetase BioD (Leptospira borgpetersenii serovar Hardjo-bovis (strain L550)).